The sequence spans 151 residues: Large ribosomal subunit protein uL22 (151 aa).

Residues 1–18 show a composition bias toward polar residues; sequence MARINYSINGDPETTSKA. Positions 1–23 are disordered; that stretch reads MARINYSINGDPETTSKAMGSEL.

Belongs to the universal ribosomal protein uL22 family. In terms of assembly, part of the 50S ribosomal subunit.

Functionally, this protein binds specifically to 23S rRNA. It makes multiple contacts with different domains of the 23S rRNA in the assembled 50S subunit and ribosome. Its function is as follows. The globular domain of the protein is located near the polypeptide exit tunnel on the outside of the subunit, while an extended beta-hairpin is found that lines the wall of the exit tunnel in the center of the 70S ribosome. This Methanosarcina acetivorans (strain ATCC 35395 / DSM 2834 / JCM 12185 / C2A) protein is Large ribosomal subunit protein uL22.